A 716-amino-acid chain; its full sequence is Epidermal growth factor receptor kinase substrate 8-like protein 1 (716 aa).

Residues 35–164 enclose the PTB domain; that stretch reads QYHVNHLVTF…LQNYRSGRGE (130 aa). 5 disordered regions span residues 175 to 194, 203 to 249, 404 to 472, 528 to 582, and 600 to 628; these read EELR…QRRP, VEPS…GPEL, PGVE…ETES, YNIL…SLDP, and SRLA…PRSE. At Ser-182 the chain carries Phosphoserine. Thr-187 is subject to Phosphothreonine. Over residues 435–446 the composition is skewed to basic and acidic residues; sequence PWEDPVEKQLQH. A compositionally biased stretch (polar residues) spans 453 to 464; the sequence is QSAPQVAVNGQQ. Positions 477 to 536 constitute an SH3 domain; it reads KARKWVLCNYDFQARNGSELSVKHRDVLEVLDDRRKWWKVRDHQGQEGYVPYNILTPHPG. The segment covering 553–563 has biased composition (pro residues); that stretch reads TPPPPPAPAPA. The stretch at 682–713 forms a coiled coil; that stretch reads VQRALLEDREKVSELEAVMEKQKKKVEGETKT.

It belongs to the EPS8 family. As to quaternary structure, interacts with ABI1. Part of a complex that contains SOS1, ABI1 and EPS8L2. Associates with F-actin. In terms of tissue distribution, detected in placenta, skin, mammary gland, bone marrow and stomach.

It is found in the cytoplasm. Stimulates guanine exchange activity of SOS1. May play a role in membrane ruffling and remodeling of the actin cytoskeleton. This Mus musculus (Mouse) protein is Epidermal growth factor receptor kinase substrate 8-like protein 1 (Eps8l1).